Reading from the N-terminus, the 99-residue chain is Plastocyanin (99 aa).

The region spanning 1–99 (LDVLLGGDDG…AGMVGKVTVN (99 aa)) is the Plastocyanin-like domain. Positions 37, 84, 87, and 92 each coordinate Cu cation.

This sequence belongs to the plastocyanin family. Cu(2+) is required as a cofactor.

Its subcellular location is the plastid. The protein localises to the chloroplast thylakoid membrane. In terms of biological role, participates in electron transfer between P700 and the cytochrome b6-f complex in photosystem I. In Solanum tuberosum (Potato), this protein is Plastocyanin (PETE).